A 307-amino-acid chain; its full sequence is Agmatinase (307 aa).

Mn(2+) is bound by residues histidine 128, aspartate 151, histidine 153, aspartate 155, aspartate 232, and aspartate 234.

Belongs to the arginase family. Agmatinase subfamily. It depends on Mn(2+) as a cofactor.

It carries out the reaction agmatine + H2O = urea + putrescine. It participates in amine and polyamine biosynthesis; putrescine biosynthesis via agmatine pathway; putrescine from agmatine: step 1/1. Catalyzes the formation of putrescine from agmatine. The chain is Agmatinase from Neisseria meningitidis serogroup C (strain 053442).